A 292-amino-acid polypeptide reads, in one-letter code: Homoserine kinase (292 aa).

80–90 provides a ligand contact to ATP; sequence PLARGLGSSSS.

It belongs to the GHMP kinase family. Homoserine kinase subfamily.

It localises to the cytoplasm. The enzyme catalyses L-homoserine + ATP = O-phospho-L-homoserine + ADP + H(+). It participates in amino-acid biosynthesis; L-threonine biosynthesis; L-threonine from L-aspartate: step 4/5. Catalyzes the ATP-dependent phosphorylation of L-homoserine to L-homoserine phosphate. This Leuconostoc mesenteroides subsp. mesenteroides (strain ATCC 8293 / DSM 20343 / BCRC 11652 / CCM 1803 / JCM 6124 / NCDO 523 / NBRC 100496 / NCIMB 8023 / NCTC 12954 / NRRL B-1118 / 37Y) protein is Homoserine kinase.